Consider the following 329-residue polypeptide: Ribosomal RNA small subunit methyltransferase H (329 aa).

S-adenosyl-L-methionine contacts are provided by residues 34 to 36, Asp59, Phe86, Asp112, and Gln119; that span reads GGH.

It belongs to the methyltransferase superfamily. RsmH family.

It localises to the cytoplasm. It carries out the reaction cytidine(1402) in 16S rRNA + S-adenosyl-L-methionine = N(4)-methylcytidine(1402) in 16S rRNA + S-adenosyl-L-homocysteine + H(+). Functionally, specifically methylates the N4 position of cytidine in position 1402 (C1402) of 16S rRNA. This chain is Ribosomal RNA small subunit methyltransferase H, found in Chlorobium phaeobacteroides (strain DSM 266 / SMG 266 / 2430).